A 382-amino-acid chain; its full sequence is Succinate--CoA ligase [ADP-forming] subunit beta (382 aa).

Residues Lys-46, 53–55 (GRG), Val-95, and Glu-100 contribute to the ATP site. Residues Asn-192 and Asp-206 each contribute to the Mg(2+) site. Substrate contacts are provided by residues Asn-257 and 314–316 (GIT).

It belongs to the succinate/malate CoA ligase beta subunit family. As to quaternary structure, heterotetramer of two alpha and two beta subunits. It depends on Mg(2+) as a cofactor.

It catalyses the reaction succinate + ATP + CoA = succinyl-CoA + ADP + phosphate. The catalysed reaction is GTP + succinate + CoA = succinyl-CoA + GDP + phosphate. It participates in carbohydrate metabolism; tricarboxylic acid cycle; succinate from succinyl-CoA (ligase route): step 1/1. In terms of biological role, succinyl-CoA synthetase functions in the citric acid cycle (TCA), coupling the hydrolysis of succinyl-CoA to the synthesis of either ATP or GTP and thus represents the only step of substrate-level phosphorylation in the TCA. The beta subunit provides nucleotide specificity of the enzyme and binds the substrate succinate, while the binding sites for coenzyme A and phosphate are found in the alpha subunit. The chain is Succinate--CoA ligase [ADP-forming] subunit beta from Bacteroides fragilis (strain ATCC 25285 / DSM 2151 / CCUG 4856 / JCM 11019 / LMG 10263 / NCTC 9343 / Onslow / VPI 2553 / EN-2).